The primary structure comprises 259 residues: MLRSVWVYSLGLAVLLQQSGREQCWEHSQCRDLSSEENILECIQACNSDLTAESPIFPGNGHLQPPSEADRNYAKSHFRSTALGRRTNGSVGSSKQAGENAALSILFAALAPPQAEEEMEESESSQQQRREDKRSYSMEHFRWGKPVGRKRRPVKVYPNGVEEESAEAYPTEMRRDLMSDLDYPLLEEVEEELGGENEVLNLQEKKDGSYKMHHFRWSRPPKDKRYGGFMKSWDERSQKPLLTLFKNVIIKDGHQKKGQ.

A signal peptide spans 1–22 (MLRSVWVYSLGLAVLLQQSGRE). Gln-23 carries the pyrrolidone carboxylic acid modification. 2 disulfides stabilise this stretch: Cys-24/Cys-46 and Cys-30/Cys-42. Residues 113-142 (PQAEEEMEESESSQQQRREDKRSYSMEHFR) are disordered. Residues 128–142 (QRREDKRSYSMEHFR) are compositionally biased toward basic and acidic residues. At Val-147 the chain carries Valine amide.

The protein belongs to the POMC family. In terms of processing, specific enzymatic cleavages at paired basic residues yield the different active peptides.

It localises to the secreted. Stimulates the adrenal glands to release cortisol. In terms of biological role, anorexigenic peptide. Increases the pigmentation of skin by increasing melanin production in melanocytes. Its function is as follows. Increases the pigmentation of skin by increasing melanin production in melanocytes. Functionally, endogenous orexigenic opiate. Endogenous opiate. This Lepisosteus osseus (Long-nosed gar) protein is Pro-opiomelanocortin (pomc).